The primary structure comprises 332 residues: Heptahelical transmembrane protein 1 (332 aa).

Positions 1–52 (MDQNGHNDEAETVSCGNGNCKSKIVPGDDHGGDESSGTKRRKKRKTQQKTMK) are disordered. Topologically, residues 1–98 (MDQNGHNDEA…VFSFHNESLN (98 aa)) are cytoplasmic. A compositionally biased stretch (basic and acidic residues) spans 26–37 (PGDDHGGDESSG). The segment covering 38 to 52 (TKRRKKRKTQQKTMK) has biased composition (basic residues). Residues 99–119 (VWTHLIGFIFFVALTVANIIH) form a helical membrane-spanning segment. Residues 120-138 (HDGFFPVDAKSPGNVTRWP) lie on the Extracellular side of the membrane. A helical membrane pass occupies residues 139–159 (FFVFLGGSMFCLLASSICHLF). The Cytoplasmic portion of the chain corresponds to 160 to 172 (CCHSKELNVFLLR). The helical transmembrane segment at 173–193 (IDYAGITAMIITSFFPPIFYI) threads the bilayer. Over 194–199 (FQCTPR) the chain is Extracellular. The chain crosses the membrane as a helical span at residues 200 to 220 (WYFIYLAGITSMGIFTIITLF). At 221–233 (TPSLSAPKYRAFR) the chain is on the cytoplasmic side. The chain crosses the membrane as a helical span at residues 234 to 254 (ALLFASMGLFGIVPAAHALVV). Residues 255 to 262 (NWGNPQRN) are Extracellular-facing. The chain crosses the membrane as a helical span at residues 263–283 (VTLVYELLMAVFYLVGTGFYV). Residues 284–303 (GRVPERLKPGWFDRVGHSHQ) are Cytoplasmic-facing. A helical transmembrane segment spans residues 304–324 (IFHVFVLLGALSHYAAALLFL). The Extracellular portion of the chain corresponds to 325-332 (DWRDHVGC).

Belongs to the ADIPOR family. As to quaternary structure, interacts (via N-terminus) with SCRM/ICE1. In terms of tissue distribution, expressed in roots, hypocotyls, vasculature of cotyledons and leaves, hydathodes and guard cells. In reproductive organs, expressed in trichomes, veins of sepals, stamens and stigmata of pistils.

The protein resides in the membrane. Its function is as follows. May act as a negative regulator of abscisic acid (ABA)-mediated osmotic stress signaling and function in cross-talk between cold and osmotic signaling. This Arabidopsis thaliana (Mouse-ear cress) protein is Heptahelical transmembrane protein 1 (HHP1).